We begin with the raw amino-acid sequence, 235 residues long: Glycerol-3-phosphate acyltransferase (235 aa).

6 helical membrane passes run 4–24, 56–76, 94–114, 126–146, 152–172, and 194–214; these read LLAILTVSYIIGSIPTSIMAG, TVTLIDIVKGVVAAVSVVAFF, LLAGMSAVIGHVFTVFAGFKG, IGIAPVSMLMVIGIFLLTVWF, VASIFAAVAFPLIIAIRKYVF, and SLDYHLIIFGLLVAFAILFTH.

This sequence belongs to the PlsY family. As to quaternary structure, probably interacts with PlsX.

The protein localises to the cell inner membrane. It carries out the reaction an acyl phosphate + sn-glycerol 3-phosphate = a 1-acyl-sn-glycero-3-phosphate + phosphate. It participates in lipid metabolism; phospholipid metabolism. In terms of biological role, catalyzes the transfer of an acyl group from acyl-phosphate (acyl-PO(4)) to glycerol-3-phosphate (G3P) to form lysophosphatidic acid (LPA). This enzyme utilizes acyl-phosphate as fatty acyl donor, but not acyl-CoA or acyl-ACP. In Chlorobium phaeovibrioides (strain DSM 265 / 1930) (Prosthecochloris vibrioformis (strain DSM 265)), this protein is Glycerol-3-phosphate acyltransferase.